Reading from the N-terminus, the 128-residue chain is Large ribosomal subunit protein bL17 (128 aa).

The protein belongs to the bacterial ribosomal protein bL17 family. In terms of assembly, part of the 50S ribosomal subunit. Contacts protein L32.

This chain is Large ribosomal subunit protein bL17, found in Erwinia tasmaniensis (strain DSM 17950 / CFBP 7177 / CIP 109463 / NCPPB 4357 / Et1/99).